We begin with the raw amino-acid sequence, 513 residues long: ATP synthase subunit alpha (513 aa).

Position 169 to 176 (169 to 176 (GDRQTGKT)) interacts with ATP.

Belongs to the ATPase alpha/beta chains family. F-type ATPases have 2 components, CF(1) - the catalytic core - and CF(0) - the membrane proton channel. CF(1) has five subunits: alpha(3), beta(3), gamma(1), delta(1), epsilon(1). CF(0) has three main subunits: a(1), b(2) and c(9-12). The alpha and beta chains form an alternating ring which encloses part of the gamma chain. CF(1) is attached to CF(0) by a central stalk formed by the gamma and epsilon chains, while a peripheral stalk is formed by the delta and b chains.

Its subcellular location is the cell inner membrane. It carries out the reaction ATP + H2O + 4 H(+)(in) = ADP + phosphate + 5 H(+)(out). Produces ATP from ADP in the presence of a proton gradient across the membrane. The alpha chain is a regulatory subunit. The protein is ATP synthase subunit alpha of Nitrosomonas europaea (strain ATCC 19718 / CIP 103999 / KCTC 2705 / NBRC 14298).